Reading from the N-terminus, the 436-residue chain is Anaerobic glycerol-3-phosphate dehydrogenase subunit B (436 aa).

It belongs to the anaerobic G-3-P dehydrogenase subunit B family. Composed of a catalytic GlpA/B dimer and of membrane bound GlpC. FMN serves as cofactor.

The catalysed reaction is a quinone + sn-glycerol 3-phosphate = dihydroxyacetone phosphate + a quinol. The protein operates within polyol metabolism; glycerol degradation via glycerol kinase pathway; glycerone phosphate from sn-glycerol 3-phosphate (anaerobic route): step 1/1. In terms of biological role, conversion of glycerol 3-phosphate to dihydroxyacetone. Uses fumarate or nitrate as electron acceptor. This is Anaerobic glycerol-3-phosphate dehydrogenase subunit B from Vibrio cholerae serotype O1 (strain ATCC 39541 / Classical Ogawa 395 / O395).